The following is a 151-amino-acid chain: Large ribosomal subunit protein uL13 (151 aa).

This sequence belongs to the universal ribosomal protein uL13 family. In terms of assembly, part of the 50S ribosomal subunit.

Functionally, this protein is one of the early assembly proteins of the 50S ribosomal subunit, although it is not seen to bind rRNA by itself. It is important during the early stages of 50S assembly. The protein is Large ribosomal subunit protein uL13 of Picosynechococcus sp. (strain ATCC 27264 / PCC 7002 / PR-6) (Agmenellum quadruplicatum).